Here is a 310-residue protein sequence, read N- to C-terminus: Nodulation protein D 2 (310 aa).

The 58-residue stretch at 6-63 (LDLNLLVALDALMTERKLTAAARRVKLSQPAMSAAIARLRTYFGDELFSMQGRELIPT) folds into the HTH lysR-type domain. Residues 23–42 (LTAAARRVKLSQPAMSAAIA) constitute a DNA-binding region (H-T-H motif).

The protein belongs to the LysR transcriptional regulatory family.

Its function is as follows. NodD regulates the expression of the nodABCFE genes which encode other nodulation proteins. NodD is also a negative regulator of its own expression. Binds flavonoids as inducers. This is Nodulation protein D 2 (nodD2) from Rhizobium meliloti (strain 1021) (Ensifer meliloti).